The primary structure comprises 396 residues: Phosphoglycerate kinase (396 aa).

Substrate is bound by residues 21–23, R36, 59–62, R113, and R146; these read DLN and HLGR. ATP is bound by residues K197, E319, and 345–348; that span reads GGDT.

It belongs to the phosphoglycerate kinase family. Monomer.

The protein localises to the cytoplasm. It carries out the reaction (2R)-3-phosphoglycerate + ATP = (2R)-3-phospho-glyceroyl phosphate + ADP. It functions in the pathway carbohydrate degradation; glycolysis; pyruvate from D-glyceraldehyde 3-phosphate: step 2/5. This is Phosphoglycerate kinase from Legionella pneumophila (strain Corby).